A 459-amino-acid polypeptide reads, in one-letter code: tRNA modification GTPase MnmE (459 aa).

(6S)-5-formyl-5,6,7,8-tetrahydrofolate-binding residues include Arg-20, Glu-85, and Arg-124. The 160-residue stretch at 221–380 (GLSTVIIGRP…LEEAIQSLFY (160 aa)) folds into the TrmE-type G domain. Asn-231 is a K(+) binding site. Residues 231 to 236 (NVGKSS), 250 to 256 (TDIPGTT), and 275 to 278 (DTAG) each bind GTP. Mg(2+) is bound at residue Ser-235. K(+) is bound by residues Thr-250, Ile-252, and Thr-255. Residue Thr-256 participates in Mg(2+) binding. Residue Lys-459 participates in (6S)-5-formyl-5,6,7,8-tetrahydrofolate binding.

It belongs to the TRAFAC class TrmE-Era-EngA-EngB-Septin-like GTPase superfamily. TrmE GTPase family. Homodimer. Heterotetramer of two MnmE and two MnmG subunits. K(+) is required as a cofactor.

It is found in the cytoplasm. Functionally, exhibits a very high intrinsic GTPase hydrolysis rate. Involved in the addition of a carboxymethylaminomethyl (cmnm) group at the wobble position (U34) of certain tRNAs, forming tRNA-cmnm(5)s(2)U34. This is tRNA modification GTPase MnmE from Bacillus velezensis (strain DSM 23117 / BGSC 10A6 / LMG 26770 / FZB42) (Bacillus amyloliquefaciens subsp. plantarum).